The sequence spans 1058 residues: Ubiquitin-like modifier-activating enzyme 1 (1058 aa).

The disordered stretch occupies residues 1 to 47; that stretch reads MSSSPLSKKRRVSGPDPKPGSNCSPAQSVLPQVPSAPTNGMAKNGSE. The residue at position 2 (Ser2) is an N-acetylserine. Residues Ser4, Ser13, Ser21, Ser24, and Ser46 each carry the phosphoserine modification. Over residues 21–38 the composition is skewed to polar residues; it reads SNCSPAQSVLPQVPSAPT. Tyr55 is subject to Phosphotyrosine. 2 tandem repeats follow at residues 63–199 and 459–611. The 2 approximate repeats stretch occupies residues 63 to 611; the sequence is GHEAMKRLQT…GTKGNVQVVI (549 aa). Residues Ala478, Asp504, Arg515, Lys528, and 576-577 contribute to the ATP site; that span reads DN. N6-succinyllysine is present on Lys528. Cys632 (glycyl thioester intermediate) is an active-site residue. Lys671 carries the N6-acetyllysine modification. Thr800 carries the phosphothreonine modification. Phosphoserine occurs at positions 810, 816, 820, and 835. Position 980 is an N6-acetyllysine (Lys980).

The protein belongs to the ubiquitin-activating E1 family. Monomer. Ubiquitous.

Its subcellular location is the cytoplasm. The protein localises to the mitochondrion. It is found in the nucleus. The catalysed reaction is ATP + ubiquitin + [E1 ubiquitin-activating enzyme]-L-cysteine = AMP + diphosphate + S-ubiquitinyl-[E1 ubiquitin-activating enzyme]-L-cysteine.. The protein operates within protein modification; protein ubiquitination. Its function is as follows. Catalyzes the first step in ubiquitin conjugation to mark cellular proteins for degradation through the ubiquitin-proteasome system. Activates ubiquitin by first adenylating its C-terminal glycine residue with ATP, and thereafter linking this residue to the side chain of a cysteine residue in E1, yielding a ubiquitin-E1 thioester and free AMP. Essential for the formation of radiation-induced foci, timely DNA repair and for response to replication stress. Promotes the recruitment of TP53BP1 and BRCA1 at DNA damage sites. This is Ubiquitin-like modifier-activating enzyme 1 (UBA1) from Oryctolagus cuniculus (Rabbit).